Consider the following 180-residue polypeptide: ADP-ribosylation factor 4 (180 aa).

The N-myristoyl glycine moiety is linked to residue Gly2. GTP-binding positions include 24 to 31 (GLDAAGKT), 67 to 71 (DVGGQ), and 126 to 129 (NKQD).

It belongs to the small GTPase superfamily. Arf family.

Its subcellular location is the golgi apparatus. GTP-binding protein involved in protein trafficking; may modulate vesicle budding and uncoating within the Golgi apparatus. May be involved in ciliogenesis. In Xenopus laevis (African clawed frog), this protein is ADP-ribosylation factor 4 (arf4).